The sequence spans 342 residues: Tetraacyldisaccharide 4'-kinase (342 aa).

68 to 75 (TVGGTGKT) contributes to the ATP binding site.

The protein belongs to the LpxK family.

It catalyses the reaction a lipid A disaccharide + ATP = a lipid IVA + ADP + H(+). The protein operates within glycolipid biosynthesis; lipid IV(A) biosynthesis; lipid IV(A) from (3R)-3-hydroxytetradecanoyl-[acyl-carrier-protein] and UDP-N-acetyl-alpha-D-glucosamine: step 6/6. Functionally, transfers the gamma-phosphate of ATP to the 4'-position of a tetraacyldisaccharide 1-phosphate intermediate (termed DS-1-P) to form tetraacyldisaccharide 1,4'-bis-phosphate (lipid IVA). This is Tetraacyldisaccharide 4'-kinase from Burkholderia cenocepacia (strain ATCC BAA-245 / DSM 16553 / LMG 16656 / NCTC 13227 / J2315 / CF5610) (Burkholderia cepacia (strain J2315)).